The chain runs to 381 residues: 3-isopropylmalate dehydrogenase (381 aa).

The substrate site is built by arginine 104, arginine 114, arginine 142, and aspartate 232. Mg(2+) contacts are provided by aspartate 232, aspartate 256, and aspartate 260. Position 290–302 (290–302 (GSAPDIAGQDKAN)) interacts with NAD(+).

This sequence belongs to the isocitrate and isopropylmalate dehydrogenases family. LeuB type 1 subfamily. Homodimer. The cofactor is Mg(2+). Mn(2+) serves as cofactor.

Its subcellular location is the cytoplasm. The enzyme catalyses (2R,3S)-3-isopropylmalate + NAD(+) = 4-methyl-2-oxopentanoate + CO2 + NADH. It functions in the pathway amino-acid biosynthesis; L-leucine biosynthesis; L-leucine from 3-methyl-2-oxobutanoate: step 3/4. Its function is as follows. Catalyzes the oxidation of 3-carboxy-2-hydroxy-4-methylpentanoate (3-isopropylmalate) to 3-carboxy-4-methyl-2-oxopentanoate. The product decarboxylates to 4-methyl-2 oxopentanoate. The sequence is that of 3-isopropylmalate dehydrogenase from Synechococcus sp. (strain JA-3-3Ab) (Cyanobacteria bacterium Yellowstone A-Prime).